A 237-amino-acid polypeptide reads, in one-letter code: Speedy protein E4 (237 aa).

Positions 1 to 61 (MASGQARPPF…KRKSEWSDES (61 aa)) are disordered.

This sequence belongs to the Speedy/Ringo family. In terms of tissue distribution, predominantly expressed in testis.

The sequence is that of Speedy protein E4 from Homo sapiens (Human).